Reading from the N-terminus, the 471-residue chain is ATP synthase subunit beta (471 aa).

ATP is bound at residue 153–160 (GGAGVGKT).

This sequence belongs to the ATPase alpha/beta chains family. F-type ATPases have 2 components, CF(1) - the catalytic core - and CF(0) - the membrane proton channel. CF(1) has five subunits: alpha(3), beta(3), gamma(1), delta(1), epsilon(1). CF(0) has four main subunits: a(1), b(1), b'(1) and c(9-12).

It localises to the cell membrane. The catalysed reaction is ATP + H2O + 4 H(+)(in) = ADP + phosphate + 5 H(+)(out). Produces ATP from ADP in the presence of a proton gradient across the membrane. The catalytic sites are hosted primarily by the beta subunits. The sequence is that of ATP synthase subunit beta from Roseiflexus castenholzii (strain DSM 13941 / HLO8).